An 816-amino-acid chain; its full sequence is Leucine--tRNA ligase (816 aa).

The 'HIGH' region motif lies at 42-52 (PYPSGSLHMGH). The 'KMSKS' region motif lies at 574 to 578 (KMSKS). Lys-577 contributes to the ATP binding site.

Belongs to the class-I aminoacyl-tRNA synthetase family.

Its subcellular location is the cytoplasm. It carries out the reaction tRNA(Leu) + L-leucine + ATP = L-leucyl-tRNA(Leu) + AMP + diphosphate. The sequence is that of Leucine--tRNA ligase from Ruthia magnifica subsp. Calyptogena magnifica.